The sequence spans 93 residues: Acylphosphatase (93 aa).

Positions 7 to 93 (CLKAVISGKV…GEFRAFEILR (87 aa)) constitute an Acylphosphatase-like domain. Catalysis depends on residues arginine 22 and asparagine 40.

It belongs to the acylphosphatase family.

It catalyses the reaction an acyl phosphate + H2O = a carboxylate + phosphate + H(+). The protein is Acylphosphatase (acyP) of Acaryochloris marina (strain MBIC 11017).